Consider the following 308-residue polypeptide: Ornithine carbamoyltransferase (308 aa).

Residues 52-55 (STRT), glutamine 79, arginine 103, and 130-133 (HPLQ) each bind carbamoyl phosphate. L-ornithine is bound by residues asparagine 162, aspartate 224, and 228-229 (SM). Carbamoyl phosphate-binding positions include 264-265 (CL) and arginine 292.

The protein belongs to the aspartate/ornithine carbamoyltransferase superfamily. OTCase family.

It is found in the cytoplasm. It catalyses the reaction carbamoyl phosphate + L-ornithine = L-citrulline + phosphate + H(+). Its pathway is amino-acid biosynthesis; L-arginine biosynthesis; L-arginine from L-ornithine and carbamoyl phosphate: step 1/3. In terms of biological role, reversibly catalyzes the transfer of the carbamoyl group from carbamoyl phosphate (CP) to the N(epsilon) atom of ornithine (ORN) to produce L-citrulline. The polypeptide is Ornithine carbamoyltransferase (Pyrobaculum calidifontis (strain DSM 21063 / JCM 11548 / VA1)).